The chain runs to 291 residues: Small ribosomal subunit biogenesis GTPase RsgA (291 aa).

Residues 63–221 (KNEIKRPPVS…IADTPGFSAL (159 aa)) form the CP-type G domain. Residues 112 to 115 (TKKD) and 164 to 172 (GQSGVGKST) contribute to the GTP site. 4 residues coordinate Zn(2+): cysteine 245, cysteine 250, histidine 252, and cysteine 258.

It belongs to the TRAFAC class YlqF/YawG GTPase family. RsgA subfamily. Monomer. Associates with 30S ribosomal subunit, binds 16S rRNA. The cofactor is Zn(2+).

The protein localises to the cytoplasm. One of several proteins that assist in the late maturation steps of the functional core of the 30S ribosomal subunit. Helps release RbfA from mature subunits. May play a role in the assembly of ribosomal proteins into the subunit. Circularly permuted GTPase that catalyzes slow GTP hydrolysis, GTPase activity is stimulated by the 30S ribosomal subunit. In Staphylococcus saprophyticus subsp. saprophyticus (strain ATCC 15305 / DSM 20229 / NCIMB 8711 / NCTC 7292 / S-41), this protein is Small ribosomal subunit biogenesis GTPase RsgA.